The chain runs to 523 residues: 2-oxopropyl-CoM reductase, carboxylating (523 aa).

53 to 54 is an FAD binding site; it reads AA. 2-oxopropyl-coenzyme M is bound at residue Arg56. Ser81 serves as a coordination point for FAD. Cys82 contacts 2-oxopropyl-coenzyme M. A disulfide bridge connects residues Cys82 and Cys87. FAD is bound at residue Ala158. NADP(+) is bound by residues 222–225 and 245–246; these read GSKT and RT. Asp353 lines the FAD pocket. Glu360 contributes to the NADP(+) binding site. An FAD-binding site is contributed by Met361. A 2-oxopropyl-coenzyme M-binding site is contributed by Arg365. Phe501 is a binding site for FAD.

Belongs to the class-I pyridine nucleotide-disulfide oxidoreductase family. As to quaternary structure, homodimer. Component II of the aliphatic epoxide carboxylation complex together with components I, III and IV. The cofactor is FAD.

It carries out the reaction coenzyme M + acetoacetate + NADP(+) = 2-oxopropyl-coenzyme M + CO2 + NADPH. Its pathway is alkene metabolism; propylene degradation. Inhibited (at 40%) by the coenzyme M analog 2-bromoethanesulfonate (BES). BES is a time-dependent inactivator of dithiothreitol-reduced 2-KPCC, where the redox active cysteines are in the free thiol forms. BES does not inactivate air-oxidized 2-KPCC, where the redox active cysteine pair is in the disulfide form. BES specifically alkylates the interchange thiol that facilitates thioether bond cleavage and enolacetone formation during catalysis. Involved in aliphatic epoxide carboxylation. Catalyzes the reductive cleavage of the thioether bond of 2-oxopropyl-coenzyme M (2-KPC), and the subsequent carboxylation of the ketopropyl cleavage product, yielding the products acetoacetate and free coenzyme M. This chain is 2-oxopropyl-CoM reductase, carboxylating, found in Xanthobacter autotrophicus (strain ATCC BAA-1158 / Py2).